A 1169-amino-acid polypeptide reads, in one-letter code: Translation initiation factor IF-2 (1169 aa).

Disordered regions lie at residues 69 to 108 and 139 to 568; these read IKAK…PLLI and ALSK…LRAA. Composition is skewed to basic and acidic residues over residues 71-83 and 92-102; these read AKNE…DNKN and HPEKLSKEGLN. A compositionally biased stretch (polar residues) spans 139 to 156; sequence ALSKNQNKTNTSVITTPN. A compositionally biased stretch (basic and acidic residues) spans 157 to 171; the sequence is LKDKKNPSALQDKKP. Residues 196 to 214 are compositionally biased toward low complexity; it reads NLANSNRNINANKINNSVN. Residues 231–248 show a composition bias toward polar residues; the sequence is ADNNNFPKKNLNSPNVKS. The segment covering 265-281 has biased composition (low complexity); the sequence is NTNRPNSNSRQPSSNTQ. Polar residues-rich tracts occupy residues 282–294, 412–432, and 439–455; these read ISAN…NRQG, MQLQ…NVNK, and NQKT…SPSP. Positions 472–486 are enriched in basic and acidic residues; the sequence is GRTDWDDSAKLEALR. Residues 544 to 560 show a composition bias toward basic residues; that stretch reads KQFKKKKKETTRQRQKR. Residues 661-838 enclose the tr-type G domain; that stretch reads KRPPVITVMG…EVEDLQANPE (178 aa). The tract at residues 670 to 677 is G1; sequence GHVDHGKT. Residue 670–677 participates in GTP binding; that stretch reads GHVDHGKT. A G2 region spans residues 695-699; it reads GITQH. The G3 stretch occupies residues 720–723; it reads DTPG. Residues 720–724 and 774–777 each bind GTP; these read DTPGH and NKID. The tract at residues 774 to 777 is G4; it reads NKID. The G5 stretch occupies residues 810–812; sequence SAI.

Belongs to the TRAFAC class translation factor GTPase superfamily. Classic translation factor GTPase family. IF-2 subfamily.

Its subcellular location is the cytoplasm. Functionally, one of the essential components for the initiation of protein synthesis. Protects formylmethionyl-tRNA from spontaneous hydrolysis and promotes its binding to the 30S ribosomal subunits. Also involved in the hydrolysis of GTP during the formation of the 70S ribosomal complex. The protein is Translation initiation factor IF-2 of Prochlorococcus marinus subsp. pastoris (strain CCMP1986 / NIES-2087 / MED4).